A 191-amino-acid polypeptide reads, in one-letter code: 3-isopropylmalate dehydratase small subunit (191 aa).

The protein belongs to the LeuD family. LeuD type 1 subfamily. In terms of assembly, heterodimer of LeuC and LeuD.

The enzyme catalyses (2R,3S)-3-isopropylmalate = (2S)-2-isopropylmalate. Its pathway is amino-acid biosynthesis; L-leucine biosynthesis; L-leucine from 3-methyl-2-oxobutanoate: step 2/4. Its function is as follows. Catalyzes the isomerization between 2-isopropylmalate and 3-isopropylmalate, via the formation of 2-isopropylmaleate. The polypeptide is 3-isopropylmalate dehydratase small subunit (Anaeromyxobacter sp. (strain K)).